Here is a 115-residue protein sequence, read N- to C-terminus: Large ribosomal subunit protein bL19 (115 aa).

This sequence belongs to the bacterial ribosomal protein bL19 family.

Its function is as follows. This protein is located at the 30S-50S ribosomal subunit interface and may play a role in the structure and function of the aminoacyl-tRNA binding site. This Salmonella choleraesuis (strain SC-B67) protein is Large ribosomal subunit protein bL19.